Here is a 120-residue protein sequence, read N- to C-terminus: Large ribosomal subunit protein uL18 (120 aa).

Belongs to the universal ribosomal protein uL18 family. Part of the 50S ribosomal subunit; part of the 5S rRNA/L5/L18/L25 subcomplex. Contacts the 5S and 23S rRNAs.

This is one of the proteins that bind and probably mediate the attachment of the 5S RNA into the large ribosomal subunit, where it forms part of the central protuberance. In Bacillus licheniformis (strain ATCC 14580 / DSM 13 / JCM 2505 / CCUG 7422 / NBRC 12200 / NCIMB 9375 / NCTC 10341 / NRRL NRS-1264 / Gibson 46), this protein is Large ribosomal subunit protein uL18.